Reading from the N-terminus, the 129-residue chain is Insulin-like growth factor 2 (129 aa).

Positions 1-24 (MGVPMGKSLLAPLTFLALASCCFA) are cleaved as a signal peptide. Residues 25–52 (AYRPSETLCGGELVDTLQFVCGDRGFYF) are b. 3 disulfide bridges follow: Cys33–Cys72, Cys45–Cys85, and Cys71–Cys76. The c stretch occupies residues 53–65 (SRPASRVSRRSSR). Residues 66-86 (GIVEECCFRSCDLALLETYCA) are a. Residues 87–92 (TPAKSE) form a d region. The propeptide at 93 to 129 (RDVSTPPTVLPDNFPRYPVGKFFQYDTWKQSAQRLRR) is e peptide.

The protein belongs to the insulin family. Interacts with MYORG; this interaction is required for IGF2 secretion. Interacts with integrins ITGAV:ITGB3 and ITGA6:ITGB4; integrin-binding is required for IGF2 signaling. In terms of processing, proteolytically processed by PCSK4, proIGF2 is cleaved at Arg-129 and Arg-92 to generate big-IGF2 and mature IGF2.

It localises to the secreted. The insulin-like growth factors possess growth-promoting activity. Major fetal growth hormone in mammals. Plays a key role in regulating fetoplacental development. IGF2 is influenced by placental lactogen. Also involved in tissue differentiation. In adults, involved in glucose metabolism in adipose tissue, skeletal muscle and liver. Acts as a ligand for integrin which is required for IGF2 signaling. Positively regulates myogenic transcription factor MYOD1 function by facilitating the recruitment of transcriptional coactivators, thereby controlling muscle terminal differentiation. Inhibits myoblast differentiation and modulates metabolism via increasing the mitochondrial respiration rate. Functionally, preptin undergoes glucose-mediated co-secretion with insulin, and acts as a physiological amplifier of glucose-mediated insulin secretion. Exhibits osteogenic properties by increasing osteoblast mitogenic activity through phosphoactivation of MAPK1 and MAPK3. In Neovison vison (American mink), this protein is Insulin-like growth factor 2.